We begin with the raw amino-acid sequence, 907 residues long: Dual serine/threonine and tyrosine protein kinase (907 aa).

Residues 373–409 adopt a coiled-coil conformation; it reads RKKENELYESLMNIANRKQEEMKDMIVETLNTMKEEL. Residues 630 to 884 enclose the Protein kinase domain; that stretch reads PKLGQELGRG…PLLGIVQPML (255 aa). ATP contacts are provided by residues 636-644 and K659; that span reads LGRGQYGVV. Catalysis depends on D755, which acts as the Proton acceptor.

The protein belongs to the protein kinase superfamily. Ser/Thr protein kinase family.

It is found in the cytoplasm. The protein localises to the cell membrane. It localises to the apical cell membrane. The protein resides in the basolateral cell membrane. Its subcellular location is the cell junction. It carries out the reaction L-seryl-[protein] + ATP = O-phospho-L-seryl-[protein] + ADP + H(+). The enzyme catalyses L-threonyl-[protein] + ATP = O-phospho-L-threonyl-[protein] + ADP + H(+). The catalysed reaction is L-tyrosyl-[protein] + ATP = O-phospho-L-tyrosyl-[protein] + ADP + H(+). In terms of biological role, acts as a positive regulator of ERK phosphorylation downstream of fibroblast growth factor-receptor activation. Involved in the regulation of both caspase-dependent apoptosis and caspase-independent cell death. In the skin, it plays a predominant role in suppressing caspase-dependent apoptosis in response to UV stress in a range of dermal cell types. The polypeptide is Dual serine/threonine and tyrosine protein kinase (Macaca mulatta (Rhesus macaque)).